The sequence spans 214 residues: MRAELAVYFIAGTQDIVRGTLPGVLEEALKAGITCFQYREKGAGSLQTASERKEMALECQQLCAKYQVPFIINDDVALALEIGADGIHVGQNDEEIRQVIASCAGKMKIGLSVHSVSEAEEAERLGAVDYIGVGPIFPTISKADAEPVSGTAILEEIRRAGIKLPIVGIGGINETNSAEVLTAGADGVSVISAITRSDDCYSVIKQLKNPGYPS.

4-amino-2-methyl-5-(diphosphooxymethyl)pyrimidine is bound by residues 37 to 41 (QYREK) and Asn-73. Mg(2+) is bound by residues Asp-74 and Asp-93. Residue Ser-112 participates in 4-amino-2-methyl-5-(diphosphooxymethyl)pyrimidine binding. Residue 139–141 (TIS) coordinates 2-[(2R,5Z)-2-carboxy-4-methylthiazol-5(2H)-ylidene]ethyl phosphate. Lys-142 is a 4-amino-2-methyl-5-(diphosphooxymethyl)pyrimidine binding site. 2-[(2R,5Z)-2-carboxy-4-methylthiazol-5(2H)-ylidene]ethyl phosphate contacts are provided by residues Gly-171 and 191–192 (IS).

This sequence belongs to the thiamine-phosphate synthase family. It depends on Mg(2+) as a cofactor.

The catalysed reaction is 2-[(2R,5Z)-2-carboxy-4-methylthiazol-5(2H)-ylidene]ethyl phosphate + 4-amino-2-methyl-5-(diphosphooxymethyl)pyrimidine + 2 H(+) = thiamine phosphate + CO2 + diphosphate. The enzyme catalyses 2-(2-carboxy-4-methylthiazol-5-yl)ethyl phosphate + 4-amino-2-methyl-5-(diphosphooxymethyl)pyrimidine + 2 H(+) = thiamine phosphate + CO2 + diphosphate. It carries out the reaction 4-methyl-5-(2-phosphooxyethyl)-thiazole + 4-amino-2-methyl-5-(diphosphooxymethyl)pyrimidine + H(+) = thiamine phosphate + diphosphate. Its pathway is cofactor biosynthesis; thiamine diphosphate biosynthesis; thiamine phosphate from 4-amino-2-methyl-5-diphosphomethylpyrimidine and 4-methyl-5-(2-phosphoethyl)-thiazole: step 1/1. Its function is as follows. Condenses 4-methyl-5-(beta-hydroxyethyl)thiazole monophosphate (THZ-P) and 2-methyl-4-amino-5-hydroxymethyl pyrimidine pyrophosphate (HMP-PP) to form thiamine monophosphate (TMP). This Listeria monocytogenes serotype 4b (strain CLIP80459) protein is Thiamine-phosphate synthase.